The following is a 417-amino-acid chain: Gamma-glutamyl phosphate reductase (417 aa).

The protein belongs to the gamma-glutamyl phosphate reductase family.

The protein localises to the cytoplasm. The enzyme catalyses L-glutamate 5-semialdehyde + phosphate + NADP(+) = L-glutamyl 5-phosphate + NADPH + H(+). Its pathway is amino-acid biosynthesis; L-proline biosynthesis; L-glutamate 5-semialdehyde from L-glutamate: step 2/2. Its function is as follows. Catalyzes the NADPH-dependent reduction of L-glutamate 5-phosphate into L-glutamate 5-semialdehyde and phosphate. The product spontaneously undergoes cyclization to form 1-pyrroline-5-carboxylate. The sequence is that of Gamma-glutamyl phosphate reductase from Chlorobium phaeobacteroides (strain BS1).